We begin with the raw amino-acid sequence, 465 residues long: Chromosomal replication initiator protein DnaA (465 aa).

Residues 1–87 form a domain I, interacts with DnaA modulators region; the sequence is MLWTDCLTRL…RPGSILSSSE (87 aa). Residues 81–123 are disordered; the sequence is SILSSSEQPATTTAALQTAPIPQPAKGKREPEPVANTAVSSKS. Low complexity predominate over residues 88 to 100; that stretch reads QPATTTAALQTAP. Residues 88–127 are domain II; the sequence is QPATTTAALQTAPIPQPAKGKREPEPVANTAVSSKSSKKK. The segment at 128–345 is domain III, AAA+ region; the sequence is LLNPQFTFSL…GALNKVVAIS (218 aa). G173, G175, K176, and T177 together coordinate ATP. The tract at residues 346–465 is domain IV, binds dsDNA; that stretch reads RFKGAPIDLD…YKNLLRLLQS (120 aa).

This sequence belongs to the DnaA family. Oligomerizes as a right-handed, spiral filament on DNA at oriC.

The protein localises to the cytoplasm. In terms of biological role, plays an essential role in the initiation and regulation of chromosomal replication. ATP-DnaA binds to the origin of replication (oriC) to initiate formation of the DNA replication initiation complex once per cell cycle. Binds the DnaA box (a 9 base pair repeat at the origin) and separates the double-stranded (ds)DNA. Forms a right-handed helical filament on oriC DNA; dsDNA binds to the exterior of the filament while single-stranded (ss)DNA is stabiized in the filament's interior. The ATP-DnaA-oriC complex binds and stabilizes one strand of the AT-rich DNA unwinding element (DUE), permitting loading of DNA polymerase. After initiation quickly degrades to an ADP-DnaA complex that is not apt for DNA replication. Binds acidic phospholipids. The sequence is that of Chromosomal replication initiator protein DnaA from Acinetobacter baumannii (strain SDF).